Reading from the N-terminus, the 194-residue chain is Dephospho-CoA kinase (194 aa).

The DPCK domain maps to T3 to L194. ATP is bound at residue G11 to T16.

Belongs to the CoaE family.

It localises to the cytoplasm. The enzyme catalyses 3'-dephospho-CoA + ATP = ADP + CoA + H(+). It functions in the pathway cofactor biosynthesis; coenzyme A biosynthesis; CoA from (R)-pantothenate: step 5/5. Its function is as follows. Catalyzes the phosphorylation of the 3'-hydroxyl group of dephosphocoenzyme A to form coenzyme A. The chain is Dephospho-CoA kinase from Corynebacterium jeikeium (strain K411).